The chain runs to 417 residues: Gamma-glutamyl phosphate reductase (417 aa).

The protein belongs to the gamma-glutamyl phosphate reductase family.

The protein localises to the cytoplasm. It catalyses the reaction L-glutamate 5-semialdehyde + phosphate + NADP(+) = L-glutamyl 5-phosphate + NADPH + H(+). It functions in the pathway amino-acid biosynthesis; L-proline biosynthesis; L-glutamate 5-semialdehyde from L-glutamate: step 2/2. Its function is as follows. Catalyzes the NADPH-dependent reduction of L-glutamate 5-phosphate into L-glutamate 5-semialdehyde and phosphate. The product spontaneously undergoes cyclization to form 1-pyrroline-5-carboxylate. The protein is Gamma-glutamyl phosphate reductase of Clostridium novyi (strain NT).